Here is an 830-residue protein sequence, read N- to C-terminus: Penicillin-binding protein 1A (830 aa).

Over 1 to 18 the chain is Cytoplasmic; the sequence is MGKKKKKRKSSAFKIILN. Residues 19-39 form a helical; Signal-anchor for type II membrane protein membrane-spanning segment; the sequence is VFLSIFLVAGVAFGGIVFAMI. Over 40–830 the chain is Extracellular; the sequence is KTAPPLNVQQ…QNHEDNKNKQ (791 aa). Positions 57-229 are transglycosylase; that stretch reads SILYDDKGQY…PSVYYPYSSA (173 aa). E96 serves as the catalytic Proton donor; for transglycosylase activity. A transpeptidase region spans residues 357–641; that stretch reads ASAVIMDYHN…AARLWGDIMK (285 aa). The active-site Acyl-ester intermediate; for transpeptidase activity is S398. The segment at 754 to 830 is disordered; sequence GGSLPPTEEK…QNHEDNKNKQ (77 aa). The segment covering 760-786 has biased composition (basic and acidic residues); it reads TEEKNNSNTRDKNKDKNKNKNKDKNPS. Residues 787 to 820 are compositionally biased toward low complexity; sequence QDKPNNNNNDNNSNNNNNNNDNNNNTKPPENDSN. The span at 821–830 shows a compositional bias: basic and acidic residues; the sequence is QNHEDNKNKQ.

This sequence in the N-terminal section; belongs to the glycosyltransferase 51 family. In the C-terminal section; belongs to the transpeptidase family.

The protein localises to the cell membrane. The enzyme catalyses [GlcNAc-(1-&gt;4)-Mur2Ac(oyl-L-Ala-gamma-D-Glu-L-Lys-D-Ala-D-Ala)](n)-di-trans,octa-cis-undecaprenyl diphosphate + beta-D-GlcNAc-(1-&gt;4)-Mur2Ac(oyl-L-Ala-gamma-D-Glu-L-Lys-D-Ala-D-Ala)-di-trans,octa-cis-undecaprenyl diphosphate = [GlcNAc-(1-&gt;4)-Mur2Ac(oyl-L-Ala-gamma-D-Glu-L-Lys-D-Ala-D-Ala)](n+1)-di-trans,octa-cis-undecaprenyl diphosphate + di-trans,octa-cis-undecaprenyl diphosphate + H(+). The catalysed reaction is Preferential cleavage: (Ac)2-L-Lys-D-Ala-|-D-Ala. Also transpeptidation of peptidyl-alanyl moieties that are N-acyl substituents of D-alanine.. It participates in cell wall biogenesis; peptidoglycan biosynthesis. Its function is as follows. Cell wall formation. Synthesis of cross-linked peptidoglycan from the lipid intermediates. The enzyme has a penicillin-insensitive transglycosylase N-terminal domain (formation of linear glycan strands) and a penicillin-sensitive transpeptidase C-terminal domain (cross-linking of the peptide subunits). The chain is Penicillin-binding protein 1A (pbpA) from Clostridium botulinum (strain Hall / ATCC 3502 / NCTC 13319 / Type A).